Reading from the N-terminus, the 780-residue chain is Kazrin (780 aa).

Residues 79–261 are a coiled coil; sequence AQVLLREEVV…LATLTKDVPK (183 aa). Residues 295–430 form a disordered region; the sequence is QQTLYHSHPP…TRHSLSLSEG (136 aa). Residues S357, S372, and S392 each carry the phosphoserine modification. The span at 416–427 shows a compositional bias: polar residues; the sequence is SQCSPTRHSLSL. SAM domains are found at residues 451 to 516, 529 to 593, and 617 to 684; these read WKAG…YRDA, DHHW…LYQV, and WTNQ…STVF. Residues 692-780 form a disordered region; sequence IRESERFGTP…EYSSLEVTNV (89 aa). Basic and acidic residues predominate over residues 760–771; it reads LQGRPEQCRLEE.

It belongs to the kazrin family.

The protein localises to the cell junction. It is found in the nucleus. The protein resides in the cytoplasm. Its subcellular location is the cytoskeleton. Component of the cornified envelope of keratinocytes. May be involved in the interplay between adherens junctions and desmosomes. The function in the nucleus is not known. The polypeptide is Kazrin (Kazn) (Rattus norvegicus (Rat)).